The chain runs to 475 residues: Probable 5'-adenylylsulfate reductase 1, chloroplastic (475 aa).

The transit peptide at 1-63 (MASATASISS…AAEPARQPVS (63 aa)) directs the protein to the chloroplast. The segment at 72-327 (AAPVAEDAAA…KAKECGLHKG (256 aa)) is reductase domain. The Thioredoxin domain occupies 341 to 475 (HKAGGANGNG…SLLAFVNSLR (135 aa)). Catalysis depends on nucleophile residues Cys-393 and Cys-396. Cys-393 and Cys-396 are disulfide-bonded.

This sequence belongs to the APS reductase family. [4Fe-4S] cluster serves as cofactor.

It is found in the plastid. The protein resides in the chloroplast. The enzyme catalyses glutathione disulfide + sulfite + AMP + 2 H(+) = adenosine 5'-phosphosulfate + 2 glutathione. Functionally, reduces sulfate for Cys biosynthesis. This is Probable 5'-adenylylsulfate reductase 1, chloroplastic (APR1) from Oryza sativa subsp. japonica (Rice).